The chain runs to 207 residues: Large ribosomal subunit protein uL4 (207 aa).

The disordered stretch occupies residues 49 to 78 (HAVKNRSAVSGGGRKPWRQKGTGRARQGSI).

It belongs to the universal ribosomal protein uL4 family. Part of the 50S ribosomal subunit.

Functionally, one of the primary rRNA binding proteins, this protein initially binds near the 5'-end of the 23S rRNA. It is important during the early stages of 50S assembly. It makes multiple contacts with different domains of the 23S rRNA in the assembled 50S subunit and ribosome. In terms of biological role, forms part of the polypeptide exit tunnel. This is Large ribosomal subunit protein uL4 from Streptococcus uberis (strain ATCC BAA-854 / 0140J).